A 660-amino-acid chain; its full sequence is ATPase WRNIP1 (660 aa).

The segment at Q17–P44 adopts a UBZ4-type zinc-finger fold. The Zn(2+) site is built by C20, C23, H31, H35, and C39. The interval P50–A191 is disordered. A phosphoserine mark is found at S65 and S75. Over residues E76 to A89 the composition is skewed to polar residues. A Glycyl lysine isopeptide (Lys-Gly) (interchain with G-Cter in ubiquitin) cross-link involves residue K81. T85 carries the phosphothreonine modification. Residues S91 and S92 each carry the phosphoserine modification. Positions S92–E104 are enriched in acidic residues. A Phosphothreonine modification is found at T116. The segment covering A135–R155 has biased composition (low complexity). K141 is covalently cross-linked (Glycyl lysine isopeptide (Lys-Gly) (interchain with G-Cter in ubiquitin)). S153 bears the Phosphoserine mark. Residues E159–D182 show a composition bias toward acidic residues. A Glycyl lysine isopeptide (Lys-Gly) (interchain with G-Cter in ubiquitin) cross-link involves residue K220. P265–T271 provides a ligand contact to ATP. Glycyl lysine isopeptide (Lys-Gly) (interchain with G-Cter in ubiquitin) cross-links involve residues K296, K305, K311, K317, and K330. K477 is covalently cross-linked (Glycyl lysine isopeptide (Lys-Gly) (interchain with G-Cter in SUMO2); alternate). A Glycyl lysine isopeptide (Lys-Gly) (interchain with G-Cter in ubiquitin); alternate cross-link involves residue K477. 2 positions are modified to phosphotyrosine: Y529 and Y557. A Glycyl lysine isopeptide (Lys-Gly) (interchain with G-Cter in ubiquitin) cross-link involves residue K622. K628 is covalently cross-linked (Glycyl lysine isopeptide (Lys-Gly) (interchain with G-Cter in ubiquitin); alternate). An N6-acetyllysine; alternate modification is found at K628. K631 participates in a covalent cross-link: Glycyl lysine isopeptide (Lys-Gly) (interchain with G-Cter in ubiquitin).

Belongs to the AAA ATPase family. RarA/MGS1/WRNIP1 subfamily. Forms homooligomers, possibly octamers. Directly interacts with POLD1, POLD2 and POLD4. Interacts with the N-terminal domain of WRN. Interacts (via UBZ4-type zinc finger) with monoubiquitin and polyubiquitin. Interacts with TRIM14 and PPP6C; these interactions positively regulate the RIGI signaling pathway. Post-translationally, sumoylated with SUMO1 and SUMO2/3. Ubiquitously expressed.

It localises to the nucleus. It is found in the cytoplasm. It carries out the reaction ATP + H2O = ADP + phosphate + H(+). Its function is as follows. Functions as a modulator of initiation or reinitiation events during DNA polymerase delta-mediated DNA synthesis. In the presence of ATP, stimulation of DNA polymerase delta-mediated DNA synthesis is decreased. Also plays a role in the innate immune defense against viruses. Stabilizes the RIGI dsRNA interaction and promotes RIGI 'Lys-63'-linked polyubiquitination. In turn, RIGI transmits the signal through mitochondrial MAVS. This chain is ATPase WRNIP1, found in Rattus norvegicus (Rat).